The chain runs to 241 residues: MPASSPGHMGGSVREPALSVALWLSWGAVLGAVTCAVALLIQQTELQSLRREVSRLQRSGGPSQKQGERPWQSLWEQSPDVLEAWKDGAKSRRRRAVLTQKHKKKHSVLHLVPVNITSKADSDVTEVMWQPVLRRGRGLEAQGDIVRVWDTGIYLLYSQVLFHDVTFTMGQVVSREGQGRRETLFRCIRSMPSDPDRAYNSCYSAGVFHLHQGDIITVKIPRANAKLSLSPHGTFLGFVKL.

A propeptide spanning residues 1-95 (MPASSPGHMG…KDGAKSRRRR (95 aa)) is cleaved from the precursor. A THD domain is found at 107 to 241 (SVLHLVPVNI…HGTFLGFVKL (135 aa)). An N-linked (GlcNAc...) asparagine glycan is attached at Asn115. Cys187 and Cys202 are joined by a disulfide.

The protein belongs to the tumor necrosis factor family. In terms of assembly, homotrimer. The soluble form derives from the membrane form by proteolytic processing.

Its subcellular location is the secreted. In terms of biological role, cytokine that binds to TNFRSF13B/TACI and to TNFRSF17/BCMA. Plays a role in the regulation of tumor cell growth. May be involved in monocyte/macrophage-mediated immunological processes. The sequence is that of Tumor necrosis factor ligand superfamily member 13 (Tnfsf13) from Mus musculus (Mouse).